We begin with the raw amino-acid sequence, 382 residues long: Probable dual-specificity RNA methyltransferase RlmN (382 aa).

E118 serves as the catalytic Proton acceptor. The region spanning 124–370 (YDKRVTMCIS…TTVRDTRGSD (247 aa)) is the Radical SAM core domain. An intrachain disulfide couples C131 to C375. Positions 138, 142, and 145 each coordinate [4Fe-4S] cluster. S-adenosyl-L-methionine-binding positions include 196 to 197 (GE), S230, 253 to 255 (SLH), and N332. Catalysis depends on C375, which acts as the S-methylcysteine intermediate.

Belongs to the radical SAM superfamily. RlmN family. It depends on [4Fe-4S] cluster as a cofactor.

Its subcellular location is the cytoplasm. The catalysed reaction is adenosine(2503) in 23S rRNA + 2 reduced [2Fe-2S]-[ferredoxin] + 2 S-adenosyl-L-methionine = 2-methyladenosine(2503) in 23S rRNA + 5'-deoxyadenosine + L-methionine + 2 oxidized [2Fe-2S]-[ferredoxin] + S-adenosyl-L-homocysteine. It catalyses the reaction adenosine(37) in tRNA + 2 reduced [2Fe-2S]-[ferredoxin] + 2 S-adenosyl-L-methionine = 2-methyladenosine(37) in tRNA + 5'-deoxyadenosine + L-methionine + 2 oxidized [2Fe-2S]-[ferredoxin] + S-adenosyl-L-homocysteine. Functionally, specifically methylates position 2 of adenine 2503 in 23S rRNA and position 2 of adenine 37 in tRNAs. This chain is Probable dual-specificity RNA methyltransferase RlmN, found in Kocuria rhizophila (strain ATCC 9341 / DSM 348 / NBRC 103217 / DC2201).